We begin with the raw amino-acid sequence, 91 residues long: MVRSVWKGPFVEGSLLKKADAARASGRHDVIKIWSRRSTILPQFVGLTFGVYNGQKHVPVAVNEEMVGHKFGEFSPTRTFHGHAGDKKAKK.

The protein belongs to the universal ribosomal protein uS19 family.

In terms of biological role, protein S19 forms a complex with S13 that binds strongly to the 16S ribosomal RNA. The protein is Small ribosomal subunit protein uS19 of Afipia carboxidovorans (strain ATCC 49405 / DSM 1227 / KCTC 32145 / OM5) (Oligotropha carboxidovorans).